Consider the following 623-residue polypeptide: Pyranose 2-oxidase (623 aa).

An N-terminal signal peptide occupies residues 1–27; it reads MSTSSSDPFFNFTKSSFRSAAAQKASA. Residues 28-38 constitute a propeptide that is removed on maturation; it reads TSLPPLPGPDK. At H167 the chain carries Tele-8alpha-FAD histidine. 2 residues coordinate substrate: Q448 and H450. The active-site Proton acceptor is H548. The active site involves N593.

Belongs to the GMC oxidoreductase family. Homotetramer. FAD is required as a cofactor. Not glycosylated.

Its subcellular location is the periplasm. It carries out the reaction D-glucose + O2 = 2-dehydro-D-glucose + H2O2. Its function is as follows. Catalyzes the oxidation of various aldopyranoses and disaccharides on carbon-2 to the corresponding 2-keto sugars concomitant with the reduction of O(2) to H(2)O(2). Plays an important role in lignin degradation of wood rot fungi by supplying the essential cosubstrate H(2)O(2) for the ligninolytic peroxidases, lignin peroxidase and manganese-dependent peroxidase. The preferred substrate is D-glucose which is converted to 2-dehydro-D-glucose. Also acts on D-xylose, together with D-glucose the major sugars derived from wood, on L-sorbose, D-galactose and 1,5-anhydroglucitol, a diagnostic marker of diabetes mellitus. The protein is Pyranose 2-oxidase (P2OX) of Trametes versicolor (White-rot fungus).